A 411-amino-acid chain; its full sequence is Glucose-1-phosphate adenylyltransferase (411 aa).

Alpha-D-glucose 1-phosphate is bound by residues Gly-162, 177-178, and Ser-195; that span reads EK.

Belongs to the bacterial/plant glucose-1-phosphate adenylyltransferase family. Homotetramer.

The enzyme catalyses alpha-D-glucose 1-phosphate + ATP + H(+) = ADP-alpha-D-glucose + diphosphate. It functions in the pathway glycan biosynthesis; glycogen biosynthesis. Its function is as follows. Involved in the biosynthesis of ADP-glucose, a building block required for the elongation reactions to produce glycogen. Catalyzes the reaction between ATP and alpha-D-glucose 1-phosphate (G1P) to produce pyrophosphate and ADP-Glc. The sequence is that of Glucose-1-phosphate adenylyltransferase from Thermodesulfovibrio yellowstonii (strain ATCC 51303 / DSM 11347 / YP87).